A 334-amino-acid chain; its full sequence is uncharacterized protein (334 aa).

Belongs to the Gfo/Idh/MocA family.

This is an uncharacterized protein from Rhizobium meliloti (Ensifer meliloti).